The sequence spans 396 residues: Ornithine aminotransferase (396 aa).

Lys-255 bears the N6-(pyridoxal phosphate)lysine mark.

The protein belongs to the class-III pyridoxal-phosphate-dependent aminotransferase family. OAT subfamily. Requires pyridoxal 5'-phosphate as cofactor.

Its subcellular location is the cytoplasm. It carries out the reaction a 2-oxocarboxylate + L-ornithine = L-glutamate 5-semialdehyde + an L-alpha-amino acid. It functions in the pathway amino-acid biosynthesis; L-proline biosynthesis; L-glutamate 5-semialdehyde from L-ornithine: step 1/1. In terms of biological role, catalyzes the interconversion of ornithine to glutamate semialdehyde. The sequence is that of Ornithine aminotransferase from Staphylococcus epidermidis (strain ATCC 12228 / FDA PCI 1200).